Here is a 401-residue protein sequence, read N- to C-terminus: Ribosomal protein uS12 methylthiotransferase RimO (401 aa).

The 108-residue stretch at 1 to 108 (MKINFINLGC…GIELLQTPKR (108 aa)) folds into the MTTase N-terminal domain. [4Fe-4S] cluster is bound by residues cysteine 10, cysteine 43, cysteine 72, cysteine 124, cysteine 128, and cysteine 131. One can recognise a Radical SAM core domain in the interval 110-339 (LTTKHYAYLK…FNLSQEILEE (230 aa)).

This sequence belongs to the methylthiotransferase family. RimO subfamily. Requires [4Fe-4S] cluster as cofactor.

It localises to the cytoplasm. It carries out the reaction L-aspartate(89)-[ribosomal protein uS12]-hydrogen + (sulfur carrier)-SH + AH2 + 2 S-adenosyl-L-methionine = 3-methylsulfanyl-L-aspartate(89)-[ribosomal protein uS12]-hydrogen + (sulfur carrier)-H + 5'-deoxyadenosine + L-methionine + A + S-adenosyl-L-homocysteine + 2 H(+). In terms of biological role, catalyzes the methylthiolation of an aspartic acid residue of ribosomal protein uS12. The protein is Ribosomal protein uS12 methylthiotransferase RimO of Hydrogenobaculum sp. (strain Y04AAS1).